The following is a 220-amino-acid chain: Splicing factor U2AF 26 kDa subunit (220 aa).

Ala-2 is modified (N-acetylalanine). Residues 12-40 form a C3H1-type 1 zinc finger; the sequence is EKDKVNCSFYFKIGVCRHGDRCSRLHNKP. One can recognise an RRM domain in the interval 65 to 147; the sequence is SHCHVSDVEV…QAVHGELSPV (83 aa). Residues 149–176 form a C3H1-type 2 zinc finger; that stretch reads DFRESCCRQYEMGECTRGGFCNFMHLRP. Residues 185 to 220 form a disordered region; it reads LYGRGPRRRSPPRFHTGHHPRERNHRCSPDHWHGRF. Residues 189–208 show a composition bias toward basic residues; it reads GPRRRSPPRFHTGHHPRERN. Residues 209–220 are compositionally biased toward basic and acidic residues; the sequence is HRCSPDHWHGRF.

It belongs to the splicing factor SR family. Interacts with GFI1, U2AF2 and C1QBP. Isoform 2 is widely expressed. Isoform 3 is highly expressed in heart, brain and lung, lower expressed in thymus and much lower expressed in peripheral blood leukocytes.

The protein resides in the nucleus. Its subcellular location is the nucleus speckle. The protein localises to the cytoplasm. Functionally, RNA-binding protein that function as a pre-mRNA splicing factor. Plays a critical role in both constitutive and enhancer-dependent splicing by mediating protein-protein interactions and protein-RNA interactions required for accurate 3'-splice site selection. Acts by enhancing the binding of U2AF2 to weak pyrimidine tracts. Also participates in the regulation of alternative pre-mRNA splicing. Activates exon 5 skipping of PTPRC during T-cell activation; an event reversed by GFI1. Binds to RNA at the AG dinucleotide at the 3'-splice site. Shows a preference for AGC or AGA. This is Splicing factor U2AF 26 kDa subunit (U2AF1L4) from Homo sapiens (Human).